The chain runs to 350 residues: Ion-translocating oxidoreductase complex subunit D (350 aa).

5 consecutive transmembrane segments (helical) span residues 20–40 (IMML…WFFG), 42–62 (GTLF…AAVL), 68–88 (PIAA…LAVS), 89–109 (IPPL…VIIA), and 123–143 (PAMI…TSWL). Threonine 187 carries the FMN phosphoryl threonine modification. The next 5 membrane-spanning stretches (helical) occupy residues 215–235 (LAGA…VWLL), 244–264 (IPVS…AFAG), 267–287 (LASP…FFIL), 301–321 (LIFG…GGYP), and 322–342 (DGVA…DYYT).

Belongs to the NqrB/RnfD family. As to quaternary structure, the complex is composed of six subunits: RnfA, RnfB, RnfC, RnfD, RnfE and RnfG. Requires FMN as cofactor.

It localises to the cell inner membrane. Its function is as follows. Part of a membrane-bound complex that couples electron transfer with translocation of ions across the membrane. The chain is Ion-translocating oxidoreductase complex subunit D from Citrobacter koseri (strain ATCC BAA-895 / CDC 4225-83 / SGSC4696).